The chain runs to 654 residues: Tumor necrosis factor alpha-induced protein 2 (654 aa).

2 disordered regions span residues 1 to 38 (MSEA…KKSK) and 50 to 78 (GKKK…PPPT). Over residues 28–38 (KKKKEKKKKSK) the composition is skewed to basic residues.

It belongs to the SEC6 family.

May play a role as a mediator of inflammation and angiogenesis. The sequence is that of Tumor necrosis factor alpha-induced protein 2 (TNFAIP2) from Homo sapiens (Human).